Here is a 132-residue protein sequence, read N- to C-terminus: Small ribosomal subunit protein uS9 (132 aa).

The protein belongs to the universal ribosomal protein uS9 family.

In Mycoplasma pneumoniae (strain ATCC 29342 / M129 / Subtype 1) (Mycoplasmoides pneumoniae), this protein is Small ribosomal subunit protein uS9 (rpsI).